Here is a 291-residue protein sequence, read N- to C-terminus: Feruloyl esterase B (291 aa).

Residues Met1–Ala18 form the signal peptide. Asn117 carries an N-linked (GlcNAc...) asparagine glycan. The Charge relay system role is filled by Ser136. Asn179 is a glycosylation site (N-linked (GlcNAc...) asparagine).

This sequence belongs to the carbohydrate esterase 1 (CE1) family. Feruloyl esterase type B subfamily.

The protein resides in the secreted. The enzyme catalyses feruloyl-polysaccharide + H2O = ferulate + polysaccharide.. In terms of biological role, feruloyl esterase which acts in synergy with xylanases in degradation of plant cell walls. Hydrolyzes the ester linkage of hydroxycinnamic acids (ferulic acid (FA) and p-coumaric acid) and diferulates present in plant cell walls. Is active on substrates containing ferulic acid ester linked to the C-5 and C-2 linkages of arabinofuranose, while it was found capable of de-esterifying acetylated glucuronoxylans. Efficiently releases ferulic acid (FA) from destarched wheat bran when incubated with an M3 xylanase. This chain is Feruloyl esterase B (Fae1a), found in Thermothelomyces thermophilus (strain ATCC 42464 / BCRC 31852 / DSM 1799) (Sporotrichum thermophile).